A 227-amino-acid polypeptide reads, in one-letter code: Cytochrome c oxidase subunit 2 (227 aa).

Topologically, residues 1 to 14 are mitochondrial intermembrane; sequence MAHPVQLGLQDATS. The chain crosses the membrane as a helical span at residues 15–45; it reads PVMEELITFHDHALMAMSLISLLVLYALFST. Residues 46-59 lie on the Mitochondrial matrix side of the membrane; the sequence is LTTKLTNTNITDAQ. A helical membrane pass occupies residues 60–87; it reads EMEIIWTILPAIILVLIALPSLRILYLT. Topologically, residues 88–227 are mitochondrial intermembrane; sequence DEVNNPSFTI…IFEMGPVFTL (140 aa). H161, C196, E198, C200, H204, and M207 together coordinate Cu cation. E198 provides a ligand contact to Mg(2+).

The protein belongs to the cytochrome c oxidase subunit 2 family. As to quaternary structure, component of the cytochrome c oxidase (complex IV, CIV), a multisubunit enzyme composed of 14 subunits. The complex is composed of a catalytic core of 3 subunits MT-CO1, MT-CO2 and MT-CO3, encoded in the mitochondrial DNA, and 11 supernumerary subunits COX4I, COX5A, COX5B, COX6A, COX6B, COX6C, COX7A, COX7B, COX7C, COX8 and NDUFA4, which are encoded in the nuclear genome. The complex exists as a monomer or a dimer and forms supercomplexes (SCs) in the inner mitochondrial membrane with NADH-ubiquinone oxidoreductase (complex I, CI) and ubiquinol-cytochrome c oxidoreductase (cytochrome b-c1 complex, complex III, CIII), resulting in different assemblies (supercomplex SCI(1)III(2)IV(1) and megacomplex MCI(2)III(2)IV(2)). Found in a complex with TMEM177, COA6, COX18, COX20, SCO1 and SCO2. Interacts with TMEM177 in a COX20-dependent manner. Interacts with COX20. Interacts with COX16. Cu cation serves as cofactor.

It is found in the mitochondrion inner membrane. It catalyses the reaction 4 Fe(II)-[cytochrome c] + O2 + 8 H(+)(in) = 4 Fe(III)-[cytochrome c] + 2 H2O + 4 H(+)(out). Its function is as follows. Component of the cytochrome c oxidase, the last enzyme in the mitochondrial electron transport chain which drives oxidative phosphorylation. The respiratory chain contains 3 multisubunit complexes succinate dehydrogenase (complex II, CII), ubiquinol-cytochrome c oxidoreductase (cytochrome b-c1 complex, complex III, CIII) and cytochrome c oxidase (complex IV, CIV), that cooperate to transfer electrons derived from NADH and succinate to molecular oxygen, creating an electrochemical gradient over the inner membrane that drives transmembrane transport and the ATP synthase. Cytochrome c oxidase is the component of the respiratory chain that catalyzes the reduction of oxygen to water. Electrons originating from reduced cytochrome c in the intermembrane space (IMS) are transferred via the dinuclear copper A center (CU(A)) of subunit 2 and heme A of subunit 1 to the active site in subunit 1, a binuclear center (BNC) formed by heme A3 and copper B (CU(B)). The BNC reduces molecular oxygen to 2 water molecules using 4 electrons from cytochrome c in the IMS and 4 protons from the mitochondrial matrix. The protein is Cytochrome c oxidase subunit 2 (MT-CO2) of Cercocebus galeritus (Tana river mangabey).